A 254-amino-acid polypeptide reads, in one-letter code: GTP cyclohydrolase 1 type 2 homolog (254 aa).

Residues His68, His69, Asp106, His222, and Glu226 each coordinate a divalent metal cation.

This sequence belongs to the GTP cyclohydrolase I type 2/NIF3 family. As to quaternary structure, homohexamer.

The chain is GTP cyclohydrolase 1 type 2 homolog from Allochromatium vinosum (strain ATCC 17899 / DSM 180 / NBRC 103801 / NCIMB 10441 / D) (Chromatium vinosum).